Here is a 429-residue protein sequence, read N- to C-terminus: UDP-N-acetylglucosamine 1-carboxyvinyltransferase (429 aa).

A phosphoenolpyruvate-binding site is contributed by 22–23; it reads KN. Residue arginine 93 coordinates UDP-N-acetyl-alpha-D-glucosamine. The active-site Proton donor is the cysteine 117. Residue cysteine 117 is modified to 2-(S-cysteinyl)pyruvic acid O-phosphothioketal. UDP-N-acetyl-alpha-D-glucosamine contacts are provided by residues 122–126, aspartate 307, and valine 329; that span reads RPVDL.

It belongs to the EPSP synthase family. MurA subfamily.

Its subcellular location is the cytoplasm. The enzyme catalyses phosphoenolpyruvate + UDP-N-acetyl-alpha-D-glucosamine = UDP-N-acetyl-3-O-(1-carboxyvinyl)-alpha-D-glucosamine + phosphate. Its pathway is cell wall biogenesis; peptidoglycan biosynthesis. In terms of biological role, cell wall formation. Adds enolpyruvyl to UDP-N-acetylglucosamine. The protein is UDP-N-acetylglucosamine 1-carboxyvinyltransferase of Chloroherpeton thalassium (strain ATCC 35110 / GB-78).